We begin with the raw amino-acid sequence, 422 residues long: p-hydroxyphenylacetate 3-hydroxylase, oxygenase component (422 aa).

W112 lines the FMN pocket. Residues H120 and S146 each coordinate substrate. FMN-binding positions include 146–148 (SSI) and 169–171 (WSS). 263–266 (RPYF) provides a ligand contact to substrate. Residues R292, Y296, 374-375 (AT), and 396-397 (HA) contribute to the FMN site. Residue Y296 participates in substrate binding.

Belongs to the HpaH/HsaA monooxygenase family. As to quaternary structure, homotetramer. The p-hydroxyphenylacetate 3-hydroxylase (HpaH) is composed of an oxygenase component C2 and a reductase component C1.

It carries out the reaction 4-hydroxyphenylacetate + FMNH2 + O2 = 3,4-dihydroxyphenylacetate + FMN + H2O + H(+). The catalysed reaction is 4-hydroxyphenylacetate + FADH2 + O2 = 3,4-dihydroxyphenylacetate + FAD + H2O + H(+). Its pathway is aromatic compound metabolism; 4-hydroxyphenylacetate degradation; pyruvate and succinate semialdehyde from 4-hydroxyphenylacetate: step 1/7. With respect to regulation, inhibited by flavin concentrations greater than 15 uM. Also inhibited by excess p-hydroxyphenylacetate (HPA). In terms of biological role, oxygenase component of a two-component system that utilizes reduced FMN (FMNH2) supplied by the reductase component to catalyze the hydroxylation of 4-hydroxyphenylacetic acid, leading to the production of 3,4-dihydroxyphenylacetate (3,4-DHPA). Also utilizes other reduced flavins such as FADH2 and reduced riboflavin to a lesser extent. Only the compounds with a hydroxyl group in the para (p-) position can be hydroxylated. May also oxidize phenol to catechol, and hydroxylate other phenol derivatives. This chain is p-hydroxyphenylacetate 3-hydroxylase, oxygenase component, found in Acinetobacter baumannii.